The sequence spans 207 residues: Small ribosomal subunit protein uS4 (207 aa).

The interval 31-55 (KCKLDSKPGQHGRTSGARTSDYGTQ) is disordered. Residues 42–53 (GRTSGARTSDYG) are compositionally biased toward polar residues. In terms of domain architecture, S4 RNA-binding spans 97-160 (SRLDNVVYRM…KKQARILEAL (64 aa)).

The protein belongs to the universal ribosomal protein uS4 family. In terms of assembly, part of the 30S ribosomal subunit. Contacts protein S5. The interaction surface between S4 and S5 is involved in control of translational fidelity.

Its function is as follows. One of the primary rRNA binding proteins, it binds directly to 16S rRNA where it nucleates assembly of the body of the 30S subunit. In terms of biological role, with S5 and S12 plays an important role in translational accuracy. In Paraburkholderia phymatum (strain DSM 17167 / CIP 108236 / LMG 21445 / STM815) (Burkholderia phymatum), this protein is Small ribosomal subunit protein uS4.